The chain runs to 179 residues: Probable inosine/xanthosine triphosphatase (179 aa).

Position 13–18 (13–18 (STNPVK)) interacts with substrate. Residue Q70 coordinates Mg(2+).

It belongs to the YjjX NTPase family. In terms of assembly, homodimer. Requires Mg(2+) as cofactor. It depends on Mn(2+) as a cofactor.

It catalyses the reaction XTP + H2O = XDP + phosphate + H(+). The enzyme catalyses ITP + H2O = IDP + phosphate + H(+). In terms of biological role, phosphatase that hydrolyzes non-canonical purine nucleotides such as XTP and ITP to their respective diphosphate derivatives. Probably excludes non-canonical purines from DNA/RNA precursor pool, thus preventing their incorporation into DNA/RNA and avoiding chromosomal lesions. The sequence is that of Probable inosine/xanthosine triphosphatase from Methanocaldococcus jannaschii (strain ATCC 43067 / DSM 2661 / JAL-1 / JCM 10045 / NBRC 100440) (Methanococcus jannaschii).